Consider the following 838-residue polypeptide: Probable beta-glucosidase I (838 aa).

N-linked (GlcNAc...) asparagine glycosylation occurs at Asn197. Asp225 is a catalytic residue. The region spanning 395–555 is the PA14 domain; sequence DGKKGFKFRV…SQEELISKAA (161 aa). Asn493 carries N-linked (GlcNAc...) asparagine glycosylation.

This sequence belongs to the glycosyl hydrolase 3 family.

The protein resides in the secreted. It catalyses the reaction Hydrolysis of terminal, non-reducing beta-D-glucosyl residues with release of beta-D-glucose.. The protein operates within glycan metabolism; cellulose degradation. Functionally, beta-glucosidases are one of a number of cellulolytic enzymes involved in the degradation of cellulosic biomass. Catalyzes the last step releasing glucose from the inhibitory cellobiose. The polypeptide is Probable beta-glucosidase I (bglI) (Aspergillus fumigatus (strain ATCC MYA-4609 / CBS 101355 / FGSC A1100 / Af293) (Neosartorya fumigata)).